The primary structure comprises 1517 residues: uncharacterized protein (1517 aa).

Positions 1–13 (MNQFPNQPGNFGQ) are enriched in polar residues. Residues 1-26 (MNQFPNQPGNFGQNYYKPVQGSIPAN) are disordered. Asparagine 35, asparagine 40, and asparagine 76 each carry an N-linked (GlcNAc...) asparagine glycan. 5 helical membrane passes run 231–251 (AIDF…AVPI), 397–417 (AIGL…TVWC), 510–530 (FVPL…KDWI), 612–632 (PNIV…FFAL), and 720–740 (VFDC…VVLL). An N-linked (GlcNAc...) asparagine glycan is attached at asparagine 917. 4 consecutive transmembrane segments (helical) span residues 956–976 (FVYA…VPPL), 985–1005 (VPAF…VNSE), 1051–1071 (VKLD…AFWS), and 1114–1134 (GIGF…TYLL). Residue asparagine 1178 is glycosylated (N-linked (GlcNAc...) asparagine). Residues 1261–1281 (PYALPLLDSGMVPVSTQLAIV) traverse the membrane as a helical segment. Asparagine 1321 carries an N-linked (GlcNAc...) asparagine glycan. The next 2 membrane-spanning stretches (helical) occupy residues 1353–1373 (APVV…TFEV) and 1408–1428 (VVVV…PVVI).

To S.pombe SpAC22F3.04.

Its subcellular location is the membrane. This is an uncharacterized protein from Schizosaccharomyces pombe (strain 972 / ATCC 24843) (Fission yeast).